A 336-amino-acid chain; its full sequence is Zinc finger protein GFI1 homolog pag-3 (336 aa).

5 consecutive C2H2-type zinc fingers follow at residues 126–148 (FHCQ…QQVH), 154–176 (FECK…LLIH), 182–204 (YPCE…TYIH), 210–232 (HKCT…TRKH), and 238–260 (FACD…RESH). Residues 253-290 (RRRHRESHHPGHPEECVSASQISSDLSPKGYMTPPTSN) form a disordered region.

As to quaternary structure, may interact with transcription factor unc-3. Expressed in the BDU neurons, the touch neurons, the VA, VB and VC motor neurons, two AVF interneurons and unidentified neurons of the retrovesicular ganglion (at protein level).

It localises to the nucleus. It is found in the cell projection. The protein resides in the axon. The protein localises to the perikaryon. Its function is as follows. Transcription factor. Plays a role in the determination of neuroblast cell fate and neuronal differentiation. Negatively modulates expression of several components of dense-core vesicles (DCVs), thereby, in a DCV membrane protein ida-1-dependent manner, regulating neurosecretion. Negatively modulates the transcription of its own gene, the mechanosensory gene mec-3, and also other touch neuron-specific genes in the BDU neurons; required for coordinated movement. Required to determine the identity of BDU sensory neurons in concert with transcription factor unc-86, regulating expression of a number of genes, including transcription factors ceh-14 and ahr-1, neuropeptides flp-10, nlp-1 and nlp-15, and tyramine receptor-encoding ser-2. Acts in concert with non-canonical WNT signaling to negatively modulate transcription of mec-3 gene in BDU neurons. May act in concert with transcription factor unc-3 in motor neuron fate determination. May play a role programmed cell death. In Caenorhabditis elegans, this protein is Zinc finger protein GFI1 homolog pag-3.